A 30-amino-acid polypeptide reads, in one-letter code: Thylakoid lumenal 13.3 kDa protein (30 aa).

It is found in the plastid. The protein resides in the chloroplast thylakoid lumen. The polypeptide is Thylakoid lumenal 13.3 kDa protein (Spinacia oleracea (Spinach)).